An 867-amino-acid chain; its full sequence is Xylosyltransferase 2 (867 aa).

Residues 1 to 15 (MVASARVQKLVRRYK) lie on the Cytoplasmic side of the membrane. Residues 16 to 36 (LAIATALAILLLQGLVVWSFS) form a helical; Signal-anchor for type II membrane protein membrane-spanning segment. Residues 37–867 (VLEDDEPGEK…GPVKADGRLR (831 aa)) are Lumenal-facing. Residues 41-122 (DEPGEKGRQK…PPPEAPGRQN (82 aa)) are disordered. Residues 53-65 (RPLDPSEGSKDTD) show a composition bias toward basic and acidic residues. The span at 73–82 (SAGRRHGRWR) shows a compositional bias: basic residues. Asn122 carries an N-linked (GlcNAc...) asparagine glycan. 2 cysteine pairs are disulfide-bonded: Cys161/Cys189 and Cys205/Cys447. Residues Val238, Asp266, and 295–297 (TIW) each bind UDP-alpha-D-xylose. N-linked (GlcNAc...) asparagine glycosylation is present at Asn326. UDP-alpha-D-xylose-binding positions include 399–400 (DW), Ser480, and 503–504 (RK). 2 cysteine pairs are disulfide-bonded: Cys580–Cys835 and Cys828–Cys841. Asn685 carries an N-linked (GlcNAc...) asparagine glycan.

It belongs to the glycosyltransferase 14 family. XylT subfamily. As to quaternary structure, monomer. The cofactor is Mg(2+). Mn(2+) is required as a cofactor. Post-translationally, contains disulfide bonds.

The protein resides in the golgi apparatus membrane. Its subcellular location is the secreted. The catalysed reaction is UDP-alpha-D-xylose + L-seryl-[protein] = 3-O-(beta-D-xylosyl)-L-seryl-[protein] + UDP + H(+). It participates in glycan metabolism; chondroitin sulfate biosynthesis. Its pathway is glycan metabolism; heparan sulfate biosynthesis. Functionally, catalyzes the first step in the biosynthesis of chondroitin sulfate, heparan sulfate and dermatan sulfate proteoglycans, such as DCN. Transfers D-xylose from UDP-D-xylose to specific serine residues of the core protein. This chain is Xylosyltransferase 2 (XYLT2), found in Bos taurus (Bovine).